Here is a 294-residue protein sequence, read N- to C-terminus: 2-dehydropantoate 2-reductase (294 aa).

NADP(+) contacts are provided by residues 10–15 (GAGALG), R34, K74, N98, and A122. K178 serves as the catalytic Proton donor. Substrate-binding positions include K178, N182, N186, N196, and 243-246 (NRSS). E258 serves as a coordination point for NADP(+).

The protein belongs to the ketopantoate reductase family.

It localises to the cytoplasm. The enzyme catalyses (R)-pantoate + NAD(+) = 2-dehydropantoate + NADH + H(+). It catalyses the reaction (R)-pantoate + NADP(+) = 2-dehydropantoate + NADPH + H(+). Its pathway is cofactor biosynthesis; coenzyme A biosynthesis. Functionally, catalyzes the NAD(P)H-dependent reduction of ketopantoate into pantoic acid. This chain is 2-dehydropantoate 2-reductase, found in Archaeoglobus fulgidus (strain ATCC 49558 / DSM 4304 / JCM 9628 / NBRC 100126 / VC-16).